A 128-amino-acid polypeptide reads, in one-letter code: Cholecystokinin B (128 aa).

Positions 1-20 (MCSGVCICLLLAMLSASSKA) are cleaved as a signal peptide. Positions 21–108 (HQATGSLGED…FDQSHRINDR (88 aa)) are excised as a propeptide. The interval 47-67 (YARASSAGQKKSFQRTDGDQR) is disordered. Tyrosine 110 is modified (sulfotyrosine). Phenylalanine 116 bears the Phenylalanine amide mark. Residues 120 to 128 (SAEEYEYSS) constitute a propeptide that is removed on maturation.

It belongs to the gastrin/cholecystokinin family. Post-translationally, the precursor is cleaved by proteases to produce a number of active cholecystokinins. As to expression, brain and gastrointestinal tract.

The protein resides in the secreted. The polypeptide is Cholecystokinin B (cck-b) (Xenopus laevis (African clawed frog)).